Consider the following 101-residue polypeptide: Small ribosomal subunit protein bS18c (101 aa).

Basic residues predominate over residues 1-19 (MNKSKRPFTKSKRSFRRRL). Residues 1 to 23 (MNKSKRPFTKSKRSFRRRLPPIQ) are disordered.

The protein belongs to the bacterial ribosomal protein bS18 family. In terms of assembly, part of the 30S ribosomal subunit.

It is found in the plastid. It localises to the chloroplast. This chain is Small ribosomal subunit protein bS18c, found in Lobularia maritima (Sweet alyssum).